Reading from the N-terminus, the 500-residue chain is Lysine--tRNA ligase (500 aa).

Mg(2+) contacts are provided by Glu410 and Glu417.

This sequence belongs to the class-II aminoacyl-tRNA synthetase family. Homodimer. Requires Mg(2+) as cofactor.

It is found in the cytoplasm. It carries out the reaction tRNA(Lys) + L-lysine + ATP = L-lysyl-tRNA(Lys) + AMP + diphosphate. The sequence is that of Lysine--tRNA ligase from Pseudomonas syringae pv. syringae (strain B728a).